We begin with the raw amino-acid sequence, 146 residues long: Hemoglobin subunit beta (146 aa).

Residue valine 1 is modified to N-acetylvaline. Positions 2–146 (HLTGEEKAAV…VATALAHKYH (145 aa)) constitute a Globin domain. A Phosphothreonine modification is found at threonine 12. Serine 44 is modified (phosphoserine). The residue at position 59 (lysine 59) is an N6-acetyllysine. Histidine 63 provides a ligand contact to heme b. Lysine 82 carries the post-translational modification N6-acetyllysine. Histidine 92 is a heme b binding site. Cysteine 93 carries the post-translational modification S-nitrosocysteine. Position 144 is an N6-acetyllysine (lysine 144).

Belongs to the globin family. Heterotetramer of two alpha chains and two beta chains. Red blood cells.

Its function is as follows. Involved in oxygen transport from the lung to the various peripheral tissues. This is Hemoglobin subunit beta (HBB) from Macroderma gigas (Australian ghost bat).